Here is a 363-residue protein sequence, read N- to C-terminus: Chorismate synthase (363 aa).

Arg47 contributes to the NADP(+) binding site. FMN-binding positions include 124 to 126 (RAS), Gly286, 301 to 305 (KPTAT), and Arg327.

It belongs to the chorismate synthase family. Homotetramer. Requires FMNH2 as cofactor.

The enzyme catalyses 5-O-(1-carboxyvinyl)-3-phosphoshikimate = chorismate + phosphate. Its pathway is metabolic intermediate biosynthesis; chorismate biosynthesis; chorismate from D-erythrose 4-phosphate and phosphoenolpyruvate: step 7/7. Its function is as follows. Catalyzes the anti-1,4-elimination of the C-3 phosphate and the C-6 proR hydrogen from 5-enolpyruvylshikimate-3-phosphate (EPSP) to yield chorismate, which is the branch point compound that serves as the starting substrate for the three terminal pathways of aromatic amino acid biosynthesis. This reaction introduces a second double bond into the aromatic ring system. This is Chorismate synthase from Prochlorococcus marinus (strain MIT 9211).